Here is a 574-residue protein sequence, read N- to C-terminus: Proline--tRNA ligase (574 aa).

It belongs to the class-II aminoacyl-tRNA synthetase family. ProS type 1 subfamily. As to quaternary structure, homodimer.

The protein localises to the cytoplasm. It carries out the reaction tRNA(Pro) + L-proline + ATP = L-prolyl-tRNA(Pro) + AMP + diphosphate. Functionally, catalyzes the attachment of proline to tRNA(Pro) in a two-step reaction: proline is first activated by ATP to form Pro-AMP and then transferred to the acceptor end of tRNA(Pro). As ProRS can inadvertently accommodate and process non-cognate amino acids such as alanine and cysteine, to avoid such errors it has two additional distinct editing activities against alanine. One activity is designated as 'pretransfer' editing and involves the tRNA(Pro)-independent hydrolysis of activated Ala-AMP. The other activity is designated 'posttransfer' editing and involves deacylation of mischarged Ala-tRNA(Pro). The misacylated Cys-tRNA(Pro) is not edited by ProRS. The polypeptide is Proline--tRNA ligase (Ralstonia nicotianae (strain ATCC BAA-1114 / GMI1000) (Ralstonia solanacearum)).